Consider the following 148-residue polypeptide: Calmodulin (148 aa).

The residue at position 2 (Ala-2) is an N-acetylalanine. 4 consecutive EF-hand domains span residues 8-43 (DQIS…LGQN), 44-79 (PTEA…KMKD), 81-116 (DSEE…LGEK), and 116-148 (KLTD…MMAK). Ca(2+) is bound by residues Asp-21, Asp-23, Asp-25, Cys-27, Glu-32, Asp-57, Asp-59, Asn-61, Thr-63, Glu-68, Asp-94, Asp-96, Asn-98, and Glu-105. The residue at position 116 (Lys-116) is an N6,N6,N6-trimethyllysine. The Ca(2+) site is built by Asp-129, Asp-131, Asp-133, Gln-135, and Glu-140.

It belongs to the calmodulin family.

Its function is as follows. Calmodulin mediates the control of a large number of enzymes, ion channels and other proteins by Ca(2+). Among the enzymes to be stimulated by the calmodulin-Ca(2+) complex are a number of protein kinases and phosphatases. This chain is Calmodulin (CAMF1), found in Fagus sylvatica (Beechnut).